Here is a 192-residue protein sequence, read N- to C-terminus: Leucine-rich repeat-containing protein 51 (192 aa).

LRR repeat units lie at residues 49 to 71 (SLTQ…NQVA), 80 to 101 (NLAW…LTTF), and 103 to 124 (NLSV…NKLA). Positions 137-175 (NPMEEEKGYRQYVLCTLSRITTFDFSGVTKADRTTAEVW) constitute an LRRCT domain.

The protein resides in the cytoplasm. The chain is Leucine-rich repeat-containing protein 51 from Homo sapiens (Human).